A 671-amino-acid polypeptide reads, in one-letter code: Probable potassium transport system protein Kup 2 (671 aa).

Transmembrane regions (helical) follow at residues Gly18–Met38, Val60–Leu80, Trp103–Pro123, Val149–Val169, Phe173–Phe193, Ala218–Ser238, Trp252–Ala272, Met292–Ile312, Leu343–Phe363, Tyr373–Ile393, Ile402–Val422, and Phe424–Ile444.

The protein belongs to the HAK/KUP transporter (TC 2.A.72) family.

It localises to the cell membrane. It carries out the reaction K(+)(in) + H(+)(in) = K(+)(out) + H(+)(out). Functionally, transport of potassium into the cell. Likely operates as a K(+):H(+) symporter. In Lactococcus lactis subsp. cremoris (strain MG1363), this protein is Probable potassium transport system protein Kup 2.